A 248-amino-acid polypeptide reads, in one-letter code: Ureidoacrylate amidohydrolase RutB (248 aa).

Residue D41 is the Proton acceptor of the active site. K150 is a catalytic residue. C183 serves as the catalytic Nucleophile.

It belongs to the isochorismatase family. RutB subfamily.

It carries out the reaction (Z)-3-ureidoacrylate + H2O + H(+) = (Z)-3-aminoacrylate + NH4(+) + CO2. The catalysed reaction is (Z)-3-ureidoacrylate + H2O = (Z)-3-aminoacrylate + carbamate + H(+). The enzyme catalyses (Z)-2-methylureidoacrylate + H2O + H(+) = (Z)-2-methylaminoacrylate + NH4(+) + CO2. In terms of biological role, hydrolyzes ureidoacrylate to form aminoacrylate and carbamate. The carbamate hydrolyzes spontaneously, thereby releasing one of the nitrogen atoms of the pyrimidine ring as ammonia and one of its carbon atoms as CO2. The chain is Ureidoacrylate amidohydrolase RutB from Methylorubrum extorquens (strain CM4 / NCIMB 13688) (Methylobacterium extorquens).